A 770-amino-acid polypeptide reads, in one-letter code: Protein PAT1 homolog 1 (770 aa).

Residues methionine 1–valine 42 form a disordered region. The tract at residues methionine 1–glutamate 84 is region A; interaction with DDX6/RCK. Residues methionine 1–arginine 397 are involved in nuclear foci localization. Residues leucine 7–asparagine 33 show a composition bias toward acidic residues. The interval asparagine 85 to histidine 388 is region N; interaction with decapping machinery. The Nuclear export signal signature appears at leucine 86 to isoleucine 95. Serine 177 is modified (phosphoserine). Position 178 is a phosphothreonine (threonine 178). Residues serine 179 and serine 184 each carry the phosphoserine modification. Position 194 is a phosphothreonine (threonine 194). An asymmetric dimethylarginine mark is found at arginine 217, arginine 223, and arginine 263. The tract at residues arginine 223 to arginine 397 is involved in RNA-binding. Serine 278 carries the post-translational modification Phosphoserine. At arginine 284 the chain carries Asymmetric dimethylarginine. Disordered regions lie at residues serine 320–glutamine 341 and glutamine 369–aspartate 394. Over residues alanine 321–glycine 337 the composition is skewed to pro residues. The span at glutamine 369–asparagine 380 shows a compositional bias: low complexity. Residue arginine 385 is modified to Omega-N-methylarginine. Positions arginine 385 to aspartate 394 are enriched in basic and acidic residues. The interval arginine 389 to glutamate 448 is region H. The segment at lysine 398–arginine 770 is involved in nuclear speckle localization. A region C region spans residues methionine 449–arginine 770.

Belongs to the PAT1 family. Interacts (via region A) with DDX6/RCK. Interacts (via region H and region C) with LSM1 and LSM4. Interacts (via region N) with DCP1A, DCP2, EDC3, EDC4 and XRN1. Interacts with the CCR4-NOT complex. Interacts with the Lsm-containing SMN-Sm protein complex. Interacts with EIF4ENIF1/4E-T.

The protein resides in the cytoplasm. It is found in the P-body. Its subcellular location is the nucleus. The protein localises to the PML body. It localises to the nucleus speckle. RNA-binding protein involved in deadenylation-dependent decapping of mRNAs, leading to the degradation of mRNAs. Acts as a scaffold protein that connects deadenylation and decapping machinery. Required for cytoplasmic mRNA processing body (P-body) assembly. In Rattus norvegicus (Rat), this protein is Protein PAT1 homolog 1 (Patl1).